Here is a 204-residue protein sequence, read N- to C-terminus: Thiamine-phosphate synthase (204 aa).

Residues 34 to 38 (QYRDK) and Asp66 each bind 4-amino-2-methyl-5-(diphosphooxymethyl)pyrimidine. Mg(2+) is bound by residues Asp67 and Asp86. Ser104 contacts 4-amino-2-methyl-5-(diphosphooxymethyl)pyrimidine. 131 to 133 (TST) serves as a coordination point for 2-[(2R,5Z)-2-carboxy-4-methylthiazol-5(2H)-ylidene]ethyl phosphate. Lys134 contributes to the 4-amino-2-methyl-5-(diphosphooxymethyl)pyrimidine binding site. 2-[(2R,5Z)-2-carboxy-4-methylthiazol-5(2H)-ylidene]ethyl phosphate is bound by residues Gly160 and 180 to 181 (VS).

Belongs to the thiamine-phosphate synthase family. Mg(2+) serves as cofactor.

The enzyme catalyses 2-[(2R,5Z)-2-carboxy-4-methylthiazol-5(2H)-ylidene]ethyl phosphate + 4-amino-2-methyl-5-(diphosphooxymethyl)pyrimidine + 2 H(+) = thiamine phosphate + CO2 + diphosphate. The catalysed reaction is 2-(2-carboxy-4-methylthiazol-5-yl)ethyl phosphate + 4-amino-2-methyl-5-(diphosphooxymethyl)pyrimidine + 2 H(+) = thiamine phosphate + CO2 + diphosphate. It carries out the reaction 4-methyl-5-(2-phosphooxyethyl)-thiazole + 4-amino-2-methyl-5-(diphosphooxymethyl)pyrimidine + H(+) = thiamine phosphate + diphosphate. It functions in the pathway cofactor biosynthesis; thiamine diphosphate biosynthesis; thiamine phosphate from 4-amino-2-methyl-5-diphosphomethylpyrimidine and 4-methyl-5-(2-phosphoethyl)-thiazole: step 1/1. Its function is as follows. Condenses 4-methyl-5-(beta-hydroxyethyl)thiazole monophosphate (THZ-P) and 2-methyl-4-amino-5-hydroxymethyl pyrimidine pyrophosphate (HMP-PP) to form thiamine monophosphate (TMP). This Picrophilus torridus (strain ATCC 700027 / DSM 9790 / JCM 10055 / NBRC 100828 / KAW 2/3) protein is Thiamine-phosphate synthase.